Consider the following 176-residue polypeptide: Ribosome rescue factor SmrB (176 aa).

One can recognise a Smr domain in the interval 93–168; sequence LDLHGYRQSE…GDAALLVLID (76 aa).

It belongs to the SmrB family. Associates with collided ribosomes, but not with correctly translating polysomes.

Its function is as follows. Acts as a ribosome collision sensor. Detects stalled/collided disomes (pairs of ribosomes where the leading ribosome is stalled and a second ribosome has collided with it) and endonucleolytically cleaves mRNA at the 5' boundary of the stalled ribosome. Stalled/collided disomes form a new interface (primarily via the 30S subunits) that binds SmrB. Cleaved mRNA becomes available for tmRNA ligation, leading to ribosomal subunit dissociation and rescue of stalled ribosomes. The sequence is that of Ribosome rescue factor SmrB from Shewanella baltica (strain OS195).